Consider the following 408-residue polypeptide: Energy-coupling factor transporter ATP-binding protein EcfA1 (408 aa).

The ABC transporter domain occupies isoleucine 140–aspartate 374. Glycine 174–serine 181 is a binding site for ATP.

The protein belongs to the ABC transporter superfamily. Energy-coupling factor EcfA family. In terms of assembly, forms a stable energy-coupling factor (ECF) transporter complex composed of 2 membrane-embedded substrate-binding proteins (S component), 2 ATP-binding proteins (A component) and 2 transmembrane proteins (T component).

It is found in the cell membrane. ATP-binding (A) component of a common energy-coupling factor (ECF) ABC-transporter complex. Unlike classic ABC transporters this ECF transporter provides the energy necessary to transport a number of different substrates. The protein is Energy-coupling factor transporter ATP-binding protein EcfA1 of Mycoplasma capricolum subsp. capricolum (strain California kid / ATCC 27343 / NCTC 10154).